A 259-amino-acid chain; its full sequence is tRNA pseudouridine synthase A (259 aa).

Catalysis depends on Asp52, which acts as the Nucleophile. Position 111 (Tyr111) interacts with substrate.

Belongs to the tRNA pseudouridine synthase TruA family. As to quaternary structure, homodimer.

The enzyme catalyses uridine(38/39/40) in tRNA = pseudouridine(38/39/40) in tRNA. Its function is as follows. Formation of pseudouridine at positions 38, 39 and 40 in the anticodon stem and loop of transfer RNAs. This Ruegeria sp. (strain TM1040) (Silicibacter sp.) protein is tRNA pseudouridine synthase A.